We begin with the raw amino-acid sequence, 101 residues long: Small ribosomal subunit protein uS14 (101 aa).

Belongs to the universal ribosomal protein uS14 family. In terms of assembly, part of the 30S ribosomal subunit. Contacts proteins S3 and S10.

In terms of biological role, binds 16S rRNA, required for the assembly of 30S particles and may also be responsible for determining the conformation of the 16S rRNA at the A site. The protein is Small ribosomal subunit protein uS14 of Rhizobium etli (strain CIAT 652).